The following is a 152-amino-acid chain: Nucleoside diphosphate kinase (152 aa).

K11, F59, R87, T93, R104, and N114 together coordinate ATP. H117 (pros-phosphohistidine intermediate) is an active-site residue.

Belongs to the NDK family. Homotetramer. It depends on Mg(2+) as a cofactor.

It localises to the cytoplasm. It carries out the reaction a 2'-deoxyribonucleoside 5'-diphosphate + ATP = a 2'-deoxyribonucleoside 5'-triphosphate + ADP. The catalysed reaction is a ribonucleoside 5'-diphosphate + ATP = a ribonucleoside 5'-triphosphate + ADP. Major role in the synthesis of nucleoside triphosphates other than ATP. The ATP gamma phosphate is transferred to the NDP beta phosphate via a ping-pong mechanism, using a phosphorylated active-site intermediate. In Prochlorococcus marinus (strain AS9601), this protein is Nucleoside diphosphate kinase.